The chain runs to 504 residues: PE-PGRS family protein PE_PGRS62 (504 aa).

Residues 4-94 (VVTVPEAVAA…AAYLNTESAN (91 aa)) form the PE domain.

This sequence belongs to the mycobacterial PE family. PGRS subfamily. As to quaternary structure, interacts with host Toll-like receptor 2 (TLR2).

The protein localises to the secreted. Its subcellular location is the cell wall. Functionally, supports mycobacterial virulence via inhibition of phagosome maturation and host inducible nitric oxide synthase (iNOS) expression. May promote the survival within macrophages by disturbing the cytokines profiles and blocking the endoplasmic reticulum (ER) stress-mediated apoptosis. May also affect bacterial cell wall composition. Expression in Mycobacterium smegmatis, a nonpathogenic species naturally deficient in PE_PGRS genes, results in enhanced resistance to various in vitro stresses. It also leads to phagosome maturation arrest and increased survival in macrophages. The polypeptide is PE-PGRS family protein PE_PGRS62 (Mycobacterium tuberculosis (strain ATCC 25618 / H37Rv)).